Here is a 244-residue protein sequence, read N- to C-terminus: ATP synthase subunit a (244 aa).

6 helical membrane passes run 17-37 (LTNI…AILT), 75-95 (FLAL…LGLP), 112-132 (DPAI…YYGV), 164-184 (LTLG…LGLL), 196-216 (FFLG…WQAF), and 217-237 (SLFI…VYMS).

This sequence belongs to the ATPase A chain family. As to quaternary structure, F-type ATPases have 2 components, CF(1) - the catalytic core - and CF(0) - the membrane proton channel. CF(1) has five subunits: alpha(3), beta(3), gamma(1), delta(1), epsilon(1). CF(0) has three main subunits: a(1), b(2) and c(9-12). The alpha and beta chains form an alternating ring which encloses part of the gamma chain. CF(1) is attached to CF(0) by a central stalk formed by the gamma and epsilon chains, while a peripheral stalk is formed by the delta and b chains.

It localises to the cell membrane. Its function is as follows. Key component of the proton channel; it plays a direct role in the translocation of protons across the membrane. The chain is ATP synthase subunit a from Bacillus velezensis (strain DSM 23117 / BGSC 10A6 / LMG 26770 / FZB42) (Bacillus amyloliquefaciens subsp. plantarum).